The primary structure comprises 797 residues: Plakophilin-3 (797 aa).

Residues 58–81 (GQQSRHNGSAELDGSAESARGMPR) form a disordered region. Residue Arg81 is modified to Omega-N-methylarginine. 3 positions are modified to phosphoserine: Ser123, Ser180, and Ser183. At Tyr195 the chain carries Phosphotyrosine. Residues 219-228 (ASSGSSRAGG) are compositionally biased toward low complexity. The interval 219–241 (ASSGSSRAGGLDWPEATEGPPSR) is disordered. Ser240 is subject to Phosphoserine. A Phosphothreonine modification is found at Thr250. Residues 253–274 (RFQSSHRSRGGTGSVSGAGLEP) form a disordered region. Residue Arg261 is modified to Omega-N-methylarginine. The required for interaction with SFN stretch occupies residues 283 to 288 (SLSLSL). 4 positions are modified to phosphoserine: Ser285, Ser313, Ser314, and Ser331. The required for interaction with GSK3B stretch occupies residues 294 to 724 (LPDVRGLDSY…AEVLVNIIAV (431 aa)). ARM repeat units follow at residues 305–348 (GHRT…HRCY), 351–390 (AAAK…NLIY), 393–432 (VDNK…NLSS), 449–487 (TDLV…NLSS), 491–536 (ATRQ…NLSY), 596–637 (PKGL…NITA), 645–684 (VLSR…NLSR), and 689–730 (KDEM…NLVV). The tract at residues 516-797 (VGKCEDKSVE…GYRKEDFLGP (282 aa)) is required for binding to PKP2 mRNA.

Belongs to the beta-catenin family. As to quaternary structure, found in a complex composed of CDH1, RAP1A and PKP3; PKP3 acts as a scaffold protein within the complex, the complex is required for CDH1 localization to mature desmosome cell junctions. Interacts with FXR1; the interaction facilitates the binding of PKP3 to PKP2 mRNA. Interacts (via ARM repeats) with GSK3B; the interaction may be involved in PKP3 protein degradation. Interacts with hyperphosphorylated and hypophosphorylated RB1; the interaction inhibits RB1 interaction with and repression of the transcription factor E2F1, potentially via sequestering RB1 to the cytoplasm. Interacts with CDKN1A; the interaction sequesters CDKN1A to the cytoplasm thereby repressing its role as an inhibitor of CDK4- and CDK6-driven RB1 phosphorylation. Interacts (via N-terminus) with SFN; the interaction maintains the cytoplasmic pool of PKP3, facilitates PKP3 exchange at desmosomes and restricts PKP3 localization to existing desmosome cell junctions. Interacts (via N-terminus) with JUP; the interaction is required for PKP3 localization to desmosome cell-cell junctions. Post-translationally, phosphorylated at Ser-285 when localized to the cytoplasm, PKP3 at desmosome cell junctions is not phosphorylated. Phosphorylation at Try-195 by SRC is induced by reactive oxygen species and potentially acts as a release mechanism from desmosome cell-cell junctions. In terms of tissue distribution, expressed in all layers of the epidermis, but is most abundant in the basal layer (at protein level). Expressed in keratinocytes of the epidermis at birth (at protein level). Expressed in the anagen non-keratinized inner root sheath cuticle and hair cuticle (at protein level). Also expressed in the matrix, precursors of the inner root sheath and hair shaft lineages (at protein level). Expressed at apical membranes in the outer hair root sheath and basal layer keratinocytes (at protein level). Expressed in intestinal epithelial cells and lamina propria of the ileum (at protein level). Expressed in keratinocytes (at protein level).

The protein resides in the nucleus. It localises to the cell junction. Its subcellular location is the desmosome. The protein localises to the cytoplasm. It is found in the cell membrane. The protein resides in the adherens junction. Functionally, a component of desmosome cell-cell junctions which are required for positive regulation of cellular adhesion. Required for the localization of DSG2, DSP and PKP2 to mature desmosome junctions. May also play a role in the maintenance of DSG3 protein abundance in keratinocytes. Required for the formation of DSP-containing desmosome precursors in the cytoplasm during desmosome assembly. Also regulates the accumulation of CDH1 to mature desmosome junctions, via cAMP-dependent signaling and its interaction with activated RAP1A. Positively regulates the stabilization of PKP2 mRNA and therefore protein abundance, via its interaction with FXR1, may also regulate the protein abundance of DSP via the same mechanism. May also regulate the protein abundance of the desmosome component PKP1. Required for the organization of desmosome junctions at intercellular borders between basal keratinocytes of the epidermis, as a result plays a role in maintenance of the dermal barrier and regulation of the dermal inflammatory response. Required during epidermal keratinocyte differentiation for cell adherence at tricellular cell-cell contacts, via regulation of the timely formation of adherens junctions and desmosomes in a calcium-dependent manner, and may also play a role in the organization of the intracellular actin fiber belt. Acts as a negative regulator of the inflammatory response in hematopoietic cells of the skin and intestine, via modulation of proinflammatory cytokine production. Important for epithelial barrier maintenance in the intestine to reduce intestinal permeability, thereby plays a role in protection from intestinal-derived endotoxemia. Required for the development of hair follicles, via a role in the regulation of inner root sheaf length, correct alignment and anterior-posterior polarity of hair follicles. Promotes proliferation and cell-cycle G1/S phase transition of keratinocytes. Promotes E2F1-driven transcription of G1/S phase promoting genes by acting to release E2F1 from its inhibitory interaction with RB1, via sequestering RB1 and CDKN1A to the cytoplasm and thereby increasing CDK4- and CDK6-driven phosphorylation of RB1. May act as a scaffold protein to facilitate MAPK phosphorylation of RPS6KA protein family members and subsequently promote downstream EGFR signaling. May play a role in the positive regulation of transcription of Wnt-mediated TCF-responsive target genes. This Mus musculus (Mouse) protein is Plakophilin-3 (Pkp3).